The chain runs to 289 residues: MAGAKEIKTKIASVQSTQKITKAMEMVATSKMRKTQDRMAASRPYSETIRNVISHVSKASIGYKHPFLVEREVKKIGILVISTDRGMCGGLNVNLFKTTLNQIKNWKEQNISTDLGLIGSKGISFFRSFGFNIKGQLSGLGDTPALEELIGVANTMFDAYRNGEIDAVYIAYNKFVNTMSQKPVVQQLVPLPESKDDHLNERQQTWDYLYEPEPKVLLDSLLVRYLESQIYQAVVDNVASEQAARMVAMKAATDNAGNLINDLRLVYNKARQASITNELNEIVAGAAAI.

The protein belongs to the ATPase gamma chain family. In terms of assembly, F-type ATPases have 2 components, CF(1) - the catalytic core - and CF(0) - the membrane proton channel. CF(1) has five subunits: alpha(3), beta(3), gamma(1), delta(1), epsilon(1). CF(0) has three main subunits: a, b and c.

The protein resides in the cell inner membrane. Functionally, produces ATP from ADP in the presence of a proton gradient across the membrane. The gamma chain is believed to be important in regulating ATPase activity and the flow of protons through the CF(0) complex. The chain is ATP synthase gamma chain from Haemophilus influenzae (strain ATCC 51907 / DSM 11121 / KW20 / Rd).